The sequence spans 201 residues: Peptidyl-prolyl cis-trans isomerase FKBP11 (201 aa).

Positions 1–27 (MTLSPLLLPLQLLLLLLFSGAVCRAEA) are cleaved as a signal peptide. The 88-residue stretch at 57-144 (GDTLHIHYTG…QYDVELIALI (88 aa)) folds into the PPIase FKBP-type domain. The helical transmembrane segment at 156-176 (ILPLVGIAMVPALLGLIGYHL) threads the bilayer.

It belongs to the FKBP-type PPIase family. Interacts with IFITM5.

Its subcellular location is the membrane. The catalysed reaction is [protein]-peptidylproline (omega=180) = [protein]-peptidylproline (omega=0). PPIases accelerate the folding of proteins during protein synthesis. The protein is Peptidyl-prolyl cis-trans isomerase FKBP11 (Fkbp11) of Mus musculus (Mouse).